A 252-amino-acid chain; its full sequence is Adapter protein MecA (252 aa).

Belongs to the MecA family. Homodimer.

Its function is as follows. Enables the recognition and targeting of unfolded and aggregated proteins to the ClpC protease or to other proteins involved in proteolysis. This is Adapter protein MecA from Streptococcus uberis (strain ATCC BAA-854 / 0140J).